The chain runs to 158 residues: 2-C-methyl-D-erythritol 2,4-cyclodiphosphate synthase (158 aa).

2 residues coordinate a divalent metal cation: Asp9 and His11. 4-CDP-2-C-methyl-D-erythritol 2-phosphate-binding positions include 9–11 and 35–36; these read DVH and HS. His43 serves as a coordination point for a divalent metal cation. Residues 57 to 59, 62 to 66, 133 to 136, Phe140, and Arg143 contribute to the 4-CDP-2-C-methyl-D-erythritol 2-phosphate site; these read DIG, FPDTD, and TTTE.

The protein belongs to the IspF family. In terms of assembly, homotrimer. A divalent metal cation is required as a cofactor.

The enzyme catalyses 4-CDP-2-C-methyl-D-erythritol 2-phosphate = 2-C-methyl-D-erythritol 2,4-cyclic diphosphate + CMP. The protein operates within isoprenoid biosynthesis; isopentenyl diphosphate biosynthesis via DXP pathway; isopentenyl diphosphate from 1-deoxy-D-xylulose 5-phosphate: step 4/6. Its function is as follows. Involved in the biosynthesis of isopentenyl diphosphate (IPP) and dimethylallyl diphosphate (DMAPP), two major building blocks of isoprenoid compounds. Catalyzes the conversion of 4-diphosphocytidyl-2-C-methyl-D-erythritol 2-phosphate (CDP-ME2P) to 2-C-methyl-D-erythritol 2,4-cyclodiphosphate (ME-CPP) with a corresponding release of cytidine 5-monophosphate (CMP). This is 2-C-methyl-D-erythritol 2,4-cyclodiphosphate synthase from Actinobacillus succinogenes (strain ATCC 55618 / DSM 22257 / CCUG 43843 / 130Z).